An 872-amino-acid chain; its full sequence is MNLILKFRRSFRTLIVLLATFCLVSILISAYFLYSGYKQEMTLIETTAEAECADIKDLPYRSIELRTIKPIDTSKTDPTVLLFVESQYSQLGQDIIAILESSRFQYQMVIAPGKGDIPPLTDSGKGKYTLIIYENILKYVSMDSWNRELLEKYCIEYSVSIIGFHKANENSLPTTQLKGFPLNLFNNVALKDCSVNPQSPLLHITKGPKVEKGPLPGEDWTIFQYNHSTYQPVLLTELQSEKSLSFLSSQTLYATIIQDLGLHDGIQRVLFGNNLNFWLHKLIFIDAISFLSGKRLTLSLDRYILVDIDDIFVGKEGTRMNVKDVKALLETQNLLRTQVANFTFNLGFSGKFYHTGTEEEDEGDDLLLRSVDEFWWFPHMWSHMQPHLFHNESSLVEQMILNKEFALEHGIPINLGYAVAPHHSGVYPVHIQLYAAWKKVWGIQVTSTEEYPHLKPARYRKGFIHNSIMVLPRQTCGLFTHTIFYKEYPGGPQELDKSIKGGELFLTILLNPISIFMTHLSNYGNDRLGLYTFVNLANFVHSWTNLKLQTLPPVQLAHKYFELFPEQKDPLWQNPCDDKRHKDIWSREKTCDHLPKFLVIGPQKTGTTALYLFLLMHPSIISNLPSPKTFEEVQFFNGNNYHKGIEWYMDFFPTPSNITSDFLFEKSANYFHSEEAPKRAASLVPKAKIITILIDPSDRAYSWYQHQRSHEDPAALRFNFYEVITTGHWAPPDLKTLQRRCLVPGWYAVHIERWLAYFSTSQLLIIDGQQLRSDPATVMDEVQKFLGVTPHYNYSEALTFDPQKGFWCQLLEGGKTKCLGKSKGRKYPPMDSESRTFLSSYYRDHNVELSKLLHRLGQPLPSWLRQELQKVR.

At 1–13 (MNLILKFRRSFRT) the chain is on the cytoplasmic side. The chain crosses the membrane as a helical; Signal-anchor for type II membrane protein span at residues 14–34 (LIVLLATFCLVSILISAYFLY). The Lumenal segment spans residues 35–872 (SGYKQEMTLI…WLRQELQKVR (838 aa)). Positions 36–588 (GYKQEMTLIE…KRHKDIWSRE (553 aa)) are heparan sulfate N-deacetylase 4. Residues Asn226, Asn341, and Asn391 are each glycosylated (N-linked (GlcNAc...) asparagine). Residues 589 to 872 (KTCDHLPKFL…WLRQELQKVR (284 aa)) form a heparan sulfate N-sulfotransferase 4 region. Lys604 acts as the For sulfotransferase activity in catalysis. 604 to 608 (KTGTT) provides a ligand contact to 3'-phosphoadenylyl sulfate. Asn657 is a glycosylation site (N-linked (GlcNAc...) asparagine). Ser702 contributes to the 3'-phosphoadenylyl sulfate binding site. An N-linked (GlcNAc...) asparagine glycan is attached at Asn793. An intrachain disulfide couples Cys808 to Cys818. 823–827 (KGRKY) is a binding site for 3'-phosphoadenylyl sulfate.

This sequence belongs to the sulfotransferase 1 family. NDST subfamily. In terms of assembly, monomer. In terms of tissue distribution, expressed at low level in brain and throughout embryogenesis. Not expressed in other tissues.

It is found in the golgi apparatus membrane. It carries out the reaction alpha-D-glucosaminyl-[heparan sulfate](n) + 3'-phosphoadenylyl sulfate = N-sulfo-alpha-D-glucosaminyl-[heparan sulfate](n) + adenosine 3',5'-bisphosphate + 2 H(+). It participates in glycan metabolism; heparan sulfate biosynthesis. The protein operates within glycan metabolism; heparin biosynthesis. Its function is as follows. Essential bifunctional enzyme that catalyzes both the N-deacetylation and the N-sulfation of glucosamine (GlcNAc) of the glycosaminoglycan in heparan sulfate. Modifies the GlcNAc-GlcA disaccharide repeating sugar backbone to make N-sulfated heparosan, a prerequisite substrate for later modifications in heparin biosynthesis. Has low deacetylase activity but high sulfotransferase activity. This is Bifunctional heparan sulfate N-deacetylase/N-sulfotransferase 4 (Ndst4) from Mus musculus (Mouse).